Consider the following 159-residue polypeptide: MCCNYYGNSCGYGCGYGSGYGSGYGCGSGSGYGCGYGSGYGCGYGSGYGCGSGSGYGCGYGSGYGCGYGSGYGCGYGSGYGCGYGSGYGCGYGSGYGCGYGSGYGCGYGSGYGCGYGSGYGSGYGSGYGSGCGCGYGSYYRSGCCGYGPSCYRRCYSCC.

Residues glycine 11–tyrosine 147 form a 66 X 2 AA repeats of G-[YCGS] region.

It belongs to the KRTAP type 6 family. Interacts with hair keratins. As to expression, expressed in skin during two hair growth cycles. Expression restricted to the cortical cells of hair follicles, appearing first in the cortical cells processing the flat nuclei located a few cells above the dermal papilla.

Its function is as follows. In the hair cortex, hair keratin intermediate filaments are embedded in an interfilamentous matrix, consisting of hair keratin-associated proteins (KRTAP), which are essential for the formation of a rigid and resistant hair shaft through their extensive disulfide bond cross-linking with abundant cysteine residues of hair keratins. The matrix proteins include the high-sulfur and high-glycine-tyrosine keratins. The polypeptide is Keratin-associated protein 6-2 (Mus musculus (Mouse)).